A 496-amino-acid chain; its full sequence is Rhamnulokinase (496 aa).

ATP is bound at residue 13 to 17 (ASSGR). Substrate is bound by residues Gly-83 and 236–238 (HDT). Residue Asp-237 is the Proton acceptor of the active site. Thr-259 contributes to the ATP binding site. Asn-296 contacts substrate. Gln-304 contributes to the ATP binding site. Cysteines 353 and 370 form a disulfide. ATP is bound at residue Gly-402. The cysteines at positions 413 and 417 are disulfide-linked.

Belongs to the rhamnulokinase family. The cofactor is Mg(2+).

It carries out the reaction L-rhamnulose + ATP = L-rhamnulose 1-phosphate + ADP + H(+). It participates in carbohydrate degradation; L-rhamnose degradation; glycerone phosphate from L-rhamnose: step 2/3. Its function is as follows. Involved in the catabolism of L-rhamnose (6-deoxy-L-mannose). Catalyzes the transfer of the gamma-phosphate group from ATP to the 1-hydroxyl group of L-rhamnulose to yield L-rhamnulose 1-phosphate. This is Rhamnulokinase from Pectobacterium atrosepticum (strain SCRI 1043 / ATCC BAA-672) (Erwinia carotovora subsp. atroseptica).